An 89-amino-acid polypeptide reads, in one-letter code: MYLDAAKKQEIFEKYGKSNTDTGSAEAQIALFSYRISHLTEHLKLNRKDYSTERALTTLVGKRRALLNYLKNRDIERYRAIVKALGLRK.

Belongs to the universal ribosomal protein uS15 family. Part of the 30S ribosomal subunit. Forms a bridge to the 50S subunit in the 70S ribosome, contacting the 23S rRNA.

Its function is as follows. One of the primary rRNA binding proteins, it binds directly to 16S rRNA where it helps nucleate assembly of the platform of the 30S subunit by binding and bridging several RNA helices of the 16S rRNA. Functionally, forms an intersubunit bridge (bridge B4) with the 23S rRNA of the 50S subunit in the ribosome. This is Small ribosomal subunit protein uS15 from Phocaeicola vulgatus (strain ATCC 8482 / DSM 1447 / JCM 5826 / CCUG 4940 / NBRC 14291 / NCTC 11154) (Bacteroides vulgatus).